Here is a 163-residue protein sequence, read N- to C-terminus: Neurotrophin-3 (163 aa).

The first 3 residues, Ile-1–Ser-3, serve as a signal peptide directing secretion. Positions Thr-4–Arg-119 are excised as a propeptide. Asn-112 is a glycosylation site (N-linked (GlcNAc...) asparagine). The tract at residues Thr-114–Ser-133 is disordered. A compositionally biased stretch (basic and acidic residues) spans Ser-123–Ser-133.

This sequence belongs to the NGF-beta family.

It is found in the secreted. In terms of biological role, seems to promote the survival of visceral and proprioceptive sensory neurons. In Lichanura trivirgata (Rosy boa), this protein is Neurotrophin-3 (NTF3).